Consider the following 502-residue polypeptide: Regulator of hypoxia-inducible factor 1 (502 aa).

The next 11 membrane-spanning stretches (helical) occupy residues 54 to 74 (LLAWMTLVVIGTLAPVSVFSC), 92 to 112 (LDVLDIFRFVAILWVMLNHTG), 138 to 158 (IFGALMGNSALGVEIFLVLSG), 188 to 208 (LAPSMFIFVYIAAGPIMNALL), 241 to 261 (MGYLWYLGLDMQLYMVAPIFL), 272 to 292 (MALTITTIIASMVIRAGYCTA), 335 to 355 (GPFLIGLLLGYITVSSKYIMV), 367 to 387 (LIVAIATIYAILPEYWNPNAG), 396 to 416 (TAVFRSVFAMAISGMIAALYF), 437 to 457 (AYLLHMPVVYIFNWLPFLQAA), and 465 to 485 (LVLPFVAILSFIAALIFYLFI).

As to expression, expressed in intestine, some sensory neurons in the head, body wall muscles and socket cells.

The protein localises to the endoplasmic reticulum membrane. In terms of biological role, involved in the response to variation in environmental oxygen levels by inhibiting hif-1-mediated gene transcription in a vhl-1-independent manner. Plays a role in susceptibility to killing mediated by P.aeruginosa and by pore-forming toxins produced by B.thuringiensis. Probably by preventing hif-1 transcriptional activity, regulates behavioral responses, such as locomotion speed following acute reoxygenation. Plays a role in normal egg-laying probably by regulating spermatogenesis and in body morphogenesis. This chain is Regulator of hypoxia-inducible factor 1, found in Caenorhabditis elegans.